Reading from the N-terminus, the 330-residue chain is Tryptophan--tRNA ligase (330 aa).

ATP is bound by residues 10-12 (QTT) and 18-19 (GN). A 'HIGH' region motif is present at residues 11-19 (TTGALHLGN). Asp-134 lines the L-tryptophan pocket. ATP contacts are provided by residues 146–148 (GED), Ile-186, and 195–199 (KMSKS). Positions 195–199 (KMSKS) match the 'KMSKS' region motif.

It belongs to the class-I aminoacyl-tRNA synthetase family. As to quaternary structure, homodimer.

The protein resides in the cytoplasm. The catalysed reaction is tRNA(Trp) + L-tryptophan + ATP = L-tryptophyl-tRNA(Trp) + AMP + diphosphate + H(+). Its function is as follows. Catalyzes the attachment of tryptophan to tRNA(Trp). The chain is Tryptophan--tRNA ligase from Rickettsia typhi (strain ATCC VR-144 / Wilmington).